The chain runs to 313 residues: Putative phosphoribosylaminoimidazole-succinocarboxamide synthase 2 (313 aa).

Belongs to the SAICAR synthetase family.

It carries out the reaction 5-amino-1-(5-phospho-D-ribosyl)imidazole-4-carboxylate + L-aspartate + ATP = (2S)-2-[5-amino-1-(5-phospho-beta-D-ribosyl)imidazole-4-carboxamido]succinate + ADP + phosphate + 2 H(+). The protein operates within purine metabolism; IMP biosynthesis via de novo pathway; 5-amino-1-(5-phospho-D-ribosyl)imidazole-4-carboxamide from 5-amino-1-(5-phospho-D-ribosyl)imidazole-4-carboxylate: step 1/2. This is Putative phosphoribosylaminoimidazole-succinocarboxamide synthase 2 (purC2) from Mesorhizobium japonicum (strain LMG 29417 / CECT 9101 / MAFF 303099) (Mesorhizobium loti (strain MAFF 303099)).